The chain runs to 323 residues: Delta-aminolevulinic acid dehydratase (323 aa).

Zn(2+)-binding residues include C118, C120, and C128. K195 functions as the Schiff-base intermediate with substrate in the catalytic mechanism. R205 and R217 together coordinate 5-aminolevulinate. Position 233 (E233) interacts with Mg(2+). The Schiff-base intermediate with substrate role is filled by K248. Residues S274 and Y313 each contribute to the 5-aminolevulinate site.

Belongs to the ALAD family. As to quaternary structure, homooctamer. The cofactor is Zn(2+).

The catalysed reaction is 2 5-aminolevulinate = porphobilinogen + 2 H2O + H(+). The protein operates within porphyrin-containing compound metabolism; protoporphyrin-IX biosynthesis; coproporphyrinogen-III from 5-aminolevulinate: step 1/4. In terms of biological role, catalyzes an early step in the biosynthesis of tetrapyrroles. Binds two molecules of 5-aminolevulinate per subunit, each at a distinct site, and catalyzes their condensation to form porphobilinogen. In Staphylococcus aureus, this protein is Delta-aminolevulinic acid dehydratase (hemB).